The sequence spans 481 residues: Glutamate mutase epsilon subunit (481 aa).

An L-glutamate-binding site is contributed by Arg-67. Gly-69 lines the adenosylcob(III)alamin pocket. Arg-99 contacts L-glutamate. An adenosylcob(III)alamin-binding site is contributed by Asn-122. Residues 148-149 (RH), Glu-170, and Tyr-176 each bind L-glutamate. Pro-179 lines the adenosylcob(III)alamin pocket. Tyr-180 contacts L-glutamate. Adenosylcob(III)alamin contacts are provided by Phe-296, Lys-325, Glu-329, and Ile-333.

This sequence belongs to the methylaspartate mutase GlmE subunit family. As to quaternary structure, heterotetramer composed of 2 epsilon subunits (GlmE) and 2 sigma subunits (GlmS). GlmE exists as a homodimer and GlmS as a monomer. It depends on adenosylcob(III)alamin as a cofactor.

It carries out the reaction (2S,3S)-3-methyl-L-aspartate = L-glutamate. The protein operates within amino-acid degradation; L-glutamate degradation via mesaconate pathway; acetate and pyruvate from L-glutamate: step 1/4. Catalyzes the carbon skeleton rearrangement of L-glutamate to L-threo-3-methylaspartate ((2S,3S)-3-methylaspartate). This chain is Glutamate mutase epsilon subunit, found in Yersinia enterocolitica serotype O:8 / biotype 1B (strain NCTC 13174 / 8081).